The chain runs to 334 residues: Inositol 2-dehydrogenase (334 aa).

Belongs to the Gfo/Idh/MocA family. Homotetramer.

The enzyme catalyses myo-inositol + NAD(+) = scyllo-inosose + NADH + H(+). Involved in the oxidation of myo-inositol (MI) to 2-keto-myo-inositol (2KMI or 2-inosose). The sequence is that of Inositol 2-dehydrogenase from Cereibacter sphaeroides (strain ATCC 17029 / ATH 2.4.9) (Rhodobacter sphaeroides).